Here is a 743-residue protein sequence, read N- to C-terminus: Tegument protein UL46 homolog (743 aa).

3 disordered regions span residues 437-481 (GCPP…VSSA), 522-590 (HQRS…SGYM), and 693-743 (RVRL…VSSL). Residues 526–552 (DSSSSDNSSCSSTETEYITISSTPSPT) are compositionally biased toward low complexity. Polar residues-rich tracts occupy residues 573–586 (QPAN…SPAN) and 697–716 (GTTT…TPSS). Over residues 722-743 (RTLSTSESPESSPEQQERVSSL) the composition is skewed to low complexity.

This sequence belongs to the herpesviridae HHV-1 VP11/12 protein family. In terms of assembly, interacts with VP16.

It localises to the virion tegument. The protein resides in the host cell membrane. In terms of biological role, abundant tegument protein. Trans-activates the immediate early genes. This chain is Tegument protein UL46 homolog, found in Equus caballus (Horse).